The primary structure comprises 524 residues: Ribonuclease Y (524 aa).

A helical transmembrane segment spans residues 7–27 (LGGLLTGIVIAIIASIIASVI). In terms of domain architecture, KH spans 214–299 (TVSVVPLPND…EMVEKARKEV (86 aa)). The region spanning 340-433 (VLSHSIEVAR…VQAADSISAA (94 aa)) is the HD domain.

This sequence belongs to the RNase Y family.

Its subcellular location is the cell membrane. Its function is as follows. Endoribonuclease that initiates mRNA decay. The sequence is that of Ribonuclease Y from Acetivibrio thermocellus (strain ATCC 27405 / DSM 1237 / JCM 9322 / NBRC 103400 / NCIMB 10682 / NRRL B-4536 / VPI 7372) (Clostridium thermocellum).